The primary structure comprises 296 residues: Protoheme IX farnesyltransferase (296 aa).

The next 9 membrane-spanning stretches (helical) occupy residues 9–29 (VTKPGIIFGNLISVIGGFLLA), 36–56 (YPLFLSTLLGVSLVVASGCVF), 75–95 (VLVKGLIDPKVSLIYASVLGI), 99–119 (LLLYVAANALAMMLAVIGFVI), 133–153 (VYGTLIGSLSGAAPPVIGYCA), 163–183 (LILLLIFSLWQMPHSYAIAIF), 209–229 (ITLYILAFMVATLMLTLSGYA), 234–254 (LVVAAAVSVWWLGMALRGYKA), and 265–285 (FVFSIIAITSLSVMMSVDFNV).

The protein belongs to the UbiA prenyltransferase family. Protoheme IX farnesyltransferase subfamily.

It is found in the cell inner membrane. It catalyses the reaction heme b + (2E,6E)-farnesyl diphosphate + H2O = Fe(II)-heme o + diphosphate. Its pathway is porphyrin-containing compound metabolism; heme O biosynthesis; heme O from protoheme: step 1/1. Its function is as follows. Converts heme B (protoheme IX) to heme O by substitution of the vinyl group on carbon 2 of heme B porphyrin ring with a hydroxyethyl farnesyl side group. This is Protoheme IX farnesyltransferase from Yersinia pestis bv. Antiqua (strain Antiqua).